The sequence spans 227 residues: E3 ubiquitin-protein ligase RNF186 (227 aa).

The RING-type zinc finger occupies 40–86 (CLVCREPYSCPRLPKLLACQHAFCAICLKLLLCVQDNTWSITCPLCR). A run of 2 helical transmembrane segments spans residues 158–178 (HLLLLALLIILIGPFIYPGVL) and 180–200 (WVLTFIIALALLMSTLFCCLP).

As to quaternary structure, interacts with BNIP1. Post-translationally, polyubiquitinated. 'Lys-29'-linked autoubiquitination leads to proteasomal degradation.

The protein localises to the endoplasmic reticulum membrane. The catalysed reaction is S-ubiquitinyl-[E2 ubiquitin-conjugating enzyme]-L-cysteine + [acceptor protein]-L-lysine = [E2 ubiquitin-conjugating enzyme]-L-cysteine + N(6)-ubiquitinyl-[acceptor protein]-L-lysine.. It participates in protein modification; protein ubiquitination. Functionally, E3 ubiquitin protein ligase that is part of an apoptotic signaling pathway activated by endoplasmic reticulum stress. Stimulates the expression of proteins specific of the unfolded protein response (UPR), ubiquitinates BNIP1 and regulates its localization to the mitochondrion and induces calcium release from the endoplasmic reticulum that ultimately leads to cell apoptosis. Plays a role in the maintenance of intestinal homeostasis and clearance of enteric pathogens. Upon NOD2 stimulation, ubiquitinates the ER stress sensor activating transcription factor 6/ATF6 and promotes the unfolded protein response UPR. Participates in basal level of autophagy maintenance by regulating the ubiquitination of EPHB2 and EPHB3. Upon stimulation by ligand EFNB1, ubiquitinates EPHB2 and further recruits MAP1LC3B for autophagy induction. Controls nutrient sensing by ubiquitinating Sestrin-2/SESN2, which is an intracellular sensor of cytosolic leucine and inhibitor of mTORC1 activity. The chain is E3 ubiquitin-protein ligase RNF186 from Homo sapiens (Human).